Here is a 62-residue protein sequence, read N- to C-terminus: UPF0434 protein RSc2531 (62 aa).

Belongs to the UPF0434 family.

The sequence is that of UPF0434 protein RSc2531 from Ralstonia nicotianae (strain ATCC BAA-1114 / GMI1000) (Ralstonia solanacearum).